A 117-amino-acid chain; its full sequence is Ig heavy chain V region 186-1 (117 aa).

The first 19 residues, 1–19 (MGWSCIMLFLAATATGVHS), serve as a signal peptide directing secretion. The framework-1 stretch occupies residues 20-49 (QVQLQQPGAELVKPGASVKLSCKASGYTFT). A disulfide bridge links Cys41 with Cys115. Residues 50 to 54 (SYWMH) form a complementarity-determining-1 region. The interval 55-68 (WVKQRPGRGLEWIG) is framework-2. Residues 69-85 (RIDPNSGGTKYNEKFKS) form a complementarity-determining-2 region. Positions 86–117 (KATLTVDTSSSTAYMQLHSLTSEDSAVYYCAR) are framework-3.

The sequence is that of Ig heavy chain V region 186-1 from Mus musculus (Mouse).